The chain runs to 441 residues: Zinc finger protein ZIC 3 (441 aa).

Residues 222-257 (LSCKWLEESPMNRPQKTCDRTFSSMHELVTHMTMEH) form a C2H2-type 1; atypical zinc finger. The segment at 266 to 293 (HICYWEECPRGGKSFKAKYKLVNHIRVH) adopts a C2H2-type 2; atypical zinc-finger fold. C2H2-type zinc fingers lie at residues 299–323 (FPCPFPGCGKIFARSENLKIHKRTH), 329–353 (FKCEFEGCDRRFANSSDRKKHMHVH), and 359–381 (YICKVCDKSYTHPSSLRKHMKVH). The tract at residues 375 to 441 (RKHMKVHESQ…LPPNFNEWYV (67 aa)) is disordered. Low complexity predominate over residues 383–399 (SQGSDSSPAASSGYESA). Over residues 406–429 (SANSEEPSKNSSATHQTNNSSHNT) the composition is skewed to polar residues.

The protein belongs to the GLI C2H2-type zinc-finger protein family.

It is found in the nucleus. Its subcellular location is the cytoplasm. Functionally, probably acts as a transcriptional activator. May bind to the minimal GLI-consensus sequence 5'-GGGTGGTC-3'. Can determine the ectodermal cell fate and promote the earliest step of neural and neural crest development. Involved in establishing left-right asymmetry in the embryo. This is Zinc finger protein ZIC 3 (zic3) from Xenopus tropicalis (Western clawed frog).